Reading from the N-terminus, the 104-residue chain is Replication factor A protein 3 (104 aa).

This sequence belongs to the replication factor A protein 3 family. Component of the heterotrimeric canonical replication protein A complex (RPA).

The protein resides in the nucleus. Its function is as follows. As part of the replication protein A (RPA/RP-A), a single-stranded DNA-binding heterotrimeric complex, may play an essential role in DNA replication, recombination and repair. Binds and stabilizes single-stranded DNA intermediates, preventing complementary DNA reannealing and recruiting different proteins involved in DNA metabolism. In Schizosaccharomyces pombe (strain 972 / ATCC 24843) (Fission yeast), this protein is Replication factor A protein 3 (ssb3).